A 200-amino-acid polypeptide reads, in one-letter code: Large ribosomal subunit protein bL25 (200 aa).

Disordered stretches follow at residues 1–20 and 179–200; these read MTIE…ASRR and PVVA…GEAA.

It belongs to the bacterial ribosomal protein bL25 family. CTC subfamily. Part of the 50S ribosomal subunit; part of the 5S rRNA/L5/L18/L25 subcomplex. Contacts the 5S rRNA. Binds to the 5S rRNA independently of L5 and L18.

Its function is as follows. This is one of the proteins that binds to the 5S RNA in the ribosome where it forms part of the central protuberance. This chain is Large ribosomal subunit protein bL25, found in Azoarcus sp. (strain BH72).